A 464-amino-acid chain; its full sequence is Glutamate decarboxylase (464 aa).

Lysine 274 carries the post-translational modification N6-(pyridoxal phosphate)lysine.

This sequence belongs to the group II decarboxylase family. Requires pyridoxal 5'-phosphate as cofactor.

The catalysed reaction is L-glutamate + H(+) = 4-aminobutanoate + CO2. Functionally, catalyzes the pyridoxal-dependent decarboxylation of glutamate to produce 4-aminobutanoate. Has weak activity with aspartate, but cannot complement an E.coli panD deletion mutant. This is Glutamate decarboxylase from Aliivibrio fischeri (strain ATCC 700601 / ES114) (Vibrio fischeri).